A 106-amino-acid polypeptide reads, in one-letter code: ATP-dependent Clp protease adapter protein ClpS (106 aa).

The protein belongs to the ClpS family. Binds to the N-terminal domain of the chaperone ClpA.

Functionally, involved in the modulation of the specificity of the ClpAP-mediated ATP-dependent protein degradation. The sequence is that of ATP-dependent Clp protease adapter protein ClpS from Salmonella arizonae (strain ATCC BAA-731 / CDC346-86 / RSK2980).